A 303-amino-acid chain; its full sequence is Cathepsin B-like CP1 (303 aa).

The N-terminal stretch at 1-19 (MALSLLLAVVCAKPLVSRA) is a signal peptide. Residue asparagine 41 is glycosylated (N-linked (GlcNAc...) asparagine). 3 cysteine pairs are disulfide-bonded: cysteine 92-cysteine 119, cysteine 102-cysteine 145, and cysteine 138-cysteine 181. Residue cysteine 105 is part of the active site. Residues histidine 249 and asparagine 270 contribute to the active site.

It belongs to the peptidase C1 family.

Its subcellular location is the vacuole. Thiol protease which is required for parasite excystation and invasion of the proximal small intestine of the human host. The polypeptide is Cathepsin B-like CP1 (CP1) (Giardia intestinalis (Giardia lamblia)).